Here is a 144-residue protein sequence, read N- to C-terminus: FK506-binding protein 2 (144 aa).

The signal sequence occupies residues 1–20; the sequence is MARIIVLIVAFMALIAGVFA. A PPIase FKBP-type domain is found at 48 to 136; it reads GDTVSVHYTG…IFTTELVSID (89 aa). A Prevents secretion from ER motif is present at residues 141–144; sequence RDEL.

Belongs to the FKBP-type PPIase family. FKBP2 subfamily.

It localises to the endoplasmic reticulum. It carries out the reaction [protein]-peptidylproline (omega=180) = [protein]-peptidylproline (omega=0). Inhibited by both FK506 and rapamycin. In terms of biological role, PPIases accelerate the folding of proteins. It catalyzes the cis-trans isomerization of proline imidic peptide bonds in oligopeptides. The sequence is that of FK506-binding protein 2 (FPR2) from Yarrowia lipolytica (strain CLIB 122 / E 150) (Yeast).